A 409-amino-acid polypeptide reads, in one-letter code: Elongation factor Tu (409 aa).

The tr-type G domain occupies 10 to 214; that stretch reads KPHLNIGTIG…AVDSFIPTPE (205 aa). Residues 19-26 are G1; that stretch reads GHVDHGKT. A GTP-binding site is contributed by 19 to 26; the sequence is GHVDHGKT. Threonine 26 is a binding site for Mg(2+). The tract at residues 60 to 64 is G2; it reads GITIN. A G3 region spans residues 81–84; it reads DCPG. Residues 81 to 85 and 136 to 139 contribute to the GTP site; these read DCPGH and NKED. Positions 136–139 are G4; it reads NKED. The interval 174-176 is G5; the sequence is SGL.

The protein belongs to the TRAFAC class translation factor GTPase superfamily. Classic translation factor GTPase family. EF-Tu/EF-1A subfamily. Monomer.

Its subcellular location is the cytoplasm. The enzyme catalyses GTP + H2O = GDP + phosphate + H(+). Functionally, GTP hydrolase that promotes the GTP-dependent binding of aminoacyl-tRNA to the A-site of ribosomes during protein biosynthesis. This chain is Elongation factor Tu, found in Nostoc punctiforme (strain ATCC 29133 / PCC 73102).